Consider the following 38-residue polypeptide: Photosystem II reaction center protein L (38 aa).

A helical transmembrane segment spans residues 17-37; sequence SLYWGLLLIFVLAVLFSNYFF.

This sequence belongs to the PsbL family. In terms of assembly, PSII is composed of 1 copy each of membrane proteins PsbA, PsbB, PsbC, PsbD, PsbE, PsbF, PsbH, PsbI, PsbJ, PsbK, PsbL, PsbM, PsbT, PsbX, PsbY, PsbZ, Psb30/Ycf12, at least 3 peripheral proteins of the oxygen-evolving complex and a large number of cofactors. It forms dimeric complexes.

The protein localises to the plastid. Its subcellular location is the chloroplast thylakoid membrane. In terms of biological role, one of the components of the core complex of photosystem II (PSII). PSII is a light-driven water:plastoquinone oxidoreductase that uses light energy to abstract electrons from H(2)O, generating O(2) and a proton gradient subsequently used for ATP formation. It consists of a core antenna complex that captures photons, and an electron transfer chain that converts photonic excitation into a charge separation. This subunit is found at the monomer-monomer interface and is required for correct PSII assembly and/or dimerization. The sequence is that of Photosystem II reaction center protein L from Gnetum gnemon (Spanish joint-fir).